The chain runs to 830 residues: Protein translocase subunit SecA (830 aa).

ATP-binding positions include Gln-86, 104–108 (GEGKT), and Asp-491. 4 residues coordinate Zn(2+): Cys-813, Cys-815, Cys-824, and Cys-825.

The protein belongs to the SecA family. As to quaternary structure, monomer and homodimer. Part of the essential Sec protein translocation apparatus which comprises SecA, SecYEG and auxiliary proteins SecDF. Other proteins may also be involved. The cofactor is Zn(2+).

Its subcellular location is the cell membrane. The protein resides in the cytoplasm. It carries out the reaction ATP + H2O + cellular proteinSide 1 = ADP + phosphate + cellular proteinSide 2.. Functionally, part of the Sec protein translocase complex. Interacts with the SecYEG preprotein conducting channel. Has a central role in coupling the hydrolysis of ATP to the transfer of proteins into and across the cell membrane, serving as an ATP-driven molecular motor driving the stepwise translocation of polypeptide chains across the membrane. The chain is Protein translocase subunit SecA from Syntrophomonas wolfei subsp. wolfei (strain DSM 2245B / Goettingen).